The following is a 1011-amino-acid chain: PE-PGRS family protein PE_PGRS30 (1011 aa).

In terms of domain architecture, PE spans 1–93 (MSFLLVEPDL…AAAYTGAEAA (93 aa)). Residues 130–696 (SNAGGNGGPG…GGTGGTGGVL (567 aa)) form a PGRS domain region. Positions 595-696 (GGAGGTGGDH…GGTGGTGGVL (102 aa)) are enriched in gly residues. A disordered region spans residues 595–701 (GGAGGTGGDH…TGGVLFGQSG (107 aa)). Positions 697 to 1011 (FGQSGSSGPP…PTQLAQAIAP (315 aa)) are C-terminal domain.

It belongs to the mycobacterial PE family. PGRS subfamily.

The protein resides in the secreted. It is found in the cell wall. Its subcellular location is the cell surface. Functionally, mediates suppression of pro-inflammatory immune response in macrophages via modulation of host cytokine response. Required for full virulence. Involved in inhibition of phago-lysosome fusion. The sequence is that of PE-PGRS family protein PE_PGRS30 from Mycobacterium tuberculosis (strain ATCC 25618 / H37Rv).